The sequence spans 437 residues: O-antigen export system ATP-binding protein RfbB (437 aa).

Residues 37 to 256 (LRGKRQSRDA…YREAISLAEA (220 aa)) form the ABC transporter domain. Position 69-76 (69-76 (GRNGSGKS)) interacts with ATP.

Belongs to the ABC transporter superfamily.

Its subcellular location is the cell inner membrane. In terms of biological role, may form an ATP-driven O-antigen export apparatus, in association with RfbA. This Myxococcus xanthus protein is O-antigen export system ATP-binding protein RfbB (rfbB).